A 651-amino-acid chain; its full sequence is PTS system N-acetylglucosamine-specific EIICBA component (651 aa).

In terms of domain architecture, PTS EIIC type-1 spans 1–371 (MNILGFFQRL…FNLKTPGRED (371 aa)). Helical transmembrane passes span 16–36 (LPIA…PDLL), 40–60 (FIAQ…AIGV), 70–90 (GSAA…MVTI), 92–112 (PEIN…GAVY), 132–152 (FVPI…GYVW), 165–185 (WIVS…RLLI), 192–212 (VLNT…GTVF), 232–252 (GFFP…YLAA), 264–284 (LLSV…EFLF), 285–305 (LFLA…SLFI), 308–328 (ALGI…VLMY), and 339–359 (MLLV…SAVI). The 83-residue stretch at 390 to 472 (TQLATSYIAA…KKVVTRGPVA (83 aa)) folds into the PTS EIIB type-1 domain. The active-site Phosphocysteine intermediate; for EIIB activity is C412. C412 is modified (phosphocysteine; by EIIA). The PTS EIIA type-1 domain maps to 519–623 (DEAFASKAVG…SMISPVVCSN (105 aa)). H556 and H571 together coordinate Zn(2+). H571 functions as the Tele-phosphohistidine intermediate; for EIIA activity in the catalytic mechanism. Residue H571 is modified to Phosphohistidine; by HPr.

Requires Zn(2+) as cofactor.

Its subcellular location is the cell inner membrane. The catalysed reaction is N(pros)-phospho-L-histidyl-[protein] + N-acetyl-D-glucosamine(out) = N-acetyl-D-glucosamine 6-phosphate(in) + L-histidyl-[protein]. The phosphoenolpyruvate-dependent sugar phosphotransferase system (sugar PTS), a major carbohydrate active transport system, catalyzes the phosphorylation of incoming sugar substrates concomitantly with their translocation across the cell membrane. This system is involved in N-acetylglucosamine transport. The protein is PTS system N-acetylglucosamine-specific EIICBA component (nagE) of Klebsiella pneumoniae.